Here is a 448-residue protein sequence, read N- to C-terminus: Tubulin beta chain (448 aa).

The GTP site is built by Q11, E69, S138, G142, T143, G144, N204, and N226. E69 serves as a coordination point for Mg(2+). A disordered region spans residues 425–448 (YQDASISEGEEEYLEEEEPLEHEE). A compositionally biased stretch (acidic residues) spans 432-448 (EGEEEYLEEEEPLEHEE).

It belongs to the tubulin family. Dimer of alpha and beta chains. A typical microtubule is a hollow water-filled tube with an outer diameter of 25 nm and an inner diameter of 15 nM. Alpha-beta heterodimers associate head-to-tail to form protofilaments running lengthwise along the microtubule wall with the beta-tubulin subunit facing the microtubule plus end conferring a structural polarity. Microtubules usually have 13 protofilaments but different protofilament numbers can be found in some organisms and specialized cells. Mg(2+) serves as cofactor.

Its subcellular location is the cytoplasm. It is found in the cytoskeleton. Functionally, tubulin is the major constituent of microtubules, a cylinder consisting of laterally associated linear protofilaments composed of alpha- and beta-tubulin heterodimers. Microtubules grow by the addition of GTP-tubulin dimers to the microtubule end, where a stabilizing cap forms. Below the cap, tubulin dimers are in GDP-bound state, owing to GTPase activity of alpha-tubulin. The sequence is that of Tubulin beta chain (benR) from Aspergillus parasiticus.